Here is a 584-residue protein sequence, read N- to C-terminus: Ras-specific guanine nucleotide-releasing factor RalGPS1 (584 aa).

Polar residues predominate over residues 1-13; it reads MDLMNGQSSSVNI. Disordered stretches follow at residues 1 to 29, 285 to 338, and 380 to 407; these read MDLM…SLSD, IEPG…IPHG, and HVPS…SELS. Residues 14–26 show a composition bias toward low complexity; that stretch reads AATASEKSSSSES. A Ras-GEF domain is found at 50 to 288; it reads TPEEYAGQIT…YKLSLKIEPG (239 aa). Positions 326-329 match the PXXP motif; it reads PTPP. The span at 388–404 shows a compositional bias: low complexity; the sequence is ESSTLSSGISIGSSDGS. Residues 458 to 570 enclose the PH domain; sequence AVTIQGVLRR…WFKHLSAACQ (113 aa).

It is found in the cytoplasm. Its subcellular location is the cell membrane. Functionally, guanine nucleotide exchange factor. May be involved in cytoskeletal organization. The chain is Ras-specific guanine nucleotide-releasing factor RalGPS1 (RALGPS1) from Gallus gallus (Chicken).